A 330-amino-acid polypeptide reads, in one-letter code: Tryptophan--tRNA ligase (330 aa).

ATP-binding positions include 10–12 (QPS) and 18–19 (GN). Residues 11–19 (PSGTLTLGN) carry the 'HIGH' region motif. Asp133 provides a ligand contact to L-tryptophan. Residues 145–147 (GED), Ile184, and 193–197 (KMSKS) each bind ATP. The 'KMSKS' region motif lies at 193–197 (KMSKS).

The protein belongs to the class-I aminoacyl-tRNA synthetase family. As to quaternary structure, homodimer.

The protein localises to the cytoplasm. The enzyme catalyses tRNA(Trp) + L-tryptophan + ATP = L-tryptophyl-tRNA(Trp) + AMP + diphosphate + H(+). Functionally, catalyzes the attachment of tryptophan to tRNA(Trp). The chain is Tryptophan--tRNA ligase from Halalkalibacterium halodurans (strain ATCC BAA-125 / DSM 18197 / FERM 7344 / JCM 9153 / C-125) (Bacillus halodurans).